Here is a 366-residue protein sequence, read N- to C-terminus: Quinolinate synthase (366 aa).

Iminosuccinate contacts are provided by His44 and Ser61. Cys108 is a binding site for [4Fe-4S] cluster. Iminosuccinate-binding positions include 139-141 (YIN) and Ser160. Cys228 lines the [4Fe-4S] cluster pocket. Iminosuccinate contacts are provided by residues 254-256 (HPE) and Thr271. Cys318 serves as a coordination point for [4Fe-4S] cluster.

Belongs to the quinolinate synthase family. Type 3 subfamily. The cofactor is [4Fe-4S] cluster.

The protein resides in the cytoplasm. The enzyme catalyses iminosuccinate + dihydroxyacetone phosphate = quinolinate + phosphate + 2 H2O + H(+). Its pathway is cofactor biosynthesis; NAD(+) biosynthesis; quinolinate from iminoaspartate: step 1/1. Functionally, catalyzes the condensation of iminoaspartate with dihydroxyacetone phosphate to form quinolinate. This is Quinolinate synthase from Listeria monocytogenes serovar 1/2a (strain ATCC BAA-679 / EGD-e).